A 223-amino-acid polypeptide reads, in one-letter code: Oxaloacetate tautomerase FAHD1, mitochondrial (223 aa).

The transit peptide at 1-30 (MATSMIQRMFKQGTKIVCVGRNYAAHAKEL) directs the protein to the mitochondrion. Mg(2+) is bound by residues glutamate 67, glutamate 69, and aspartate 98.

Belongs to the FAH family. Requires Mg(2+) as cofactor. Mn(2+) serves as cofactor.

The protein resides in the mitochondrion. It catalyses the reaction oxaloacetate = enol-oxaloacetate. In terms of biological role, tautomerase that converts enol-oxaloacetate, a strong inhibitor of succinate dehydrogenase, to the physiological keto form of oxaloacetate. The chain is Oxaloacetate tautomerase FAHD1, mitochondrial from Arabidopsis thaliana (Mouse-ear cress).